We begin with the raw amino-acid sequence, 304 residues long: Oxygen-dependent coproporphyrinogen-III oxidase (304 aa).

Ser94 lines the substrate pocket. A divalent metal cation contacts are provided by His98 and His108. His108 (proton donor) is an active-site residue. Position 110–112 (110–112 (NVR)) interacts with substrate. His147 and His177 together coordinate a divalent metal cation. Residues 242 to 277 (YVEFNLVYDRGTLFGLQTGGRTESILMSMPPLVRWE) form an important for dimerization region. Substrate is bound at residue 260–262 (GGR).

It belongs to the aerobic coproporphyrinogen-III oxidase family. Homodimer. A divalent metal cation is required as a cofactor.

The protein localises to the cytoplasm. It carries out the reaction coproporphyrinogen III + O2 + 2 H(+) = protoporphyrinogen IX + 2 CO2 + 2 H2O. The protein operates within porphyrin-containing compound metabolism; protoporphyrin-IX biosynthesis; protoporphyrinogen-IX from coproporphyrinogen-III (O2 route): step 1/1. Functionally, involved in the heme biosynthesis. Catalyzes the aerobic oxidative decarboxylation of propionate groups of rings A and B of coproporphyrinogen-III to yield the vinyl groups in protoporphyrinogen-IX. This Shewanella piezotolerans (strain WP3 / JCM 13877) protein is Oxygen-dependent coproporphyrinogen-III oxidase.